A 443-amino-acid polypeptide reads, in one-letter code: Threonine/serine transporter TdcC (443 aa).

11 helical membrane passes run 22–42 (TTWT…FFPI), 44–64 (AGFG…PIAF), 97–117 (GVVI…IYGV), 140–160 (FVAL…KDLM), 163–183 (VMSY…LSLI), 207–227 (ILIT…FSPI), 261–281 (MLMV…LSPA), 311–331 (FAIT…FKSF), 366–386 (ISMI…PNIL), 389–409 (IEAM…MYAI), and 423–443 (DNVF…YKLF).

This sequence belongs to the amino acid/polyamine transporter 2 family. SdaC/TdcC subfamily.

It localises to the cell inner membrane. It carries out the reaction L-threonine(in) + H(+)(in) = L-threonine(out) + H(+)(out). The catalysed reaction is L-serine(in) + H(+)(in) = L-serine(out) + H(+)(out). In terms of biological role, involved in the import of threonine and serine into the cell, with the concomitant import of a proton (symport system). This chain is Threonine/serine transporter TdcC, found in Shigella sonnei (strain Ss046).